The sequence spans 150 residues: Transcriptional repressor NrdR (150 aa).

Residues 3–34 fold into a zinc finger; sequence CPFCNFSDSKVVDSRPDKGGAAIRRRRECESC. Positions 49–139 constitute an ATP-cone domain; sequence PLVTKRDGRR…VYRSFKDINE (91 aa).

It belongs to the NrdR family. Zn(2+) serves as cofactor.

Negatively regulates transcription of bacterial ribonucleotide reductase nrd genes and operons by binding to NrdR-boxes. This chain is Transcriptional repressor NrdR, found in Citrifermentans bemidjiense (strain ATCC BAA-1014 / DSM 16622 / JCM 12645 / Bem) (Geobacter bemidjiensis).